The following is a 216-amino-acid chain: Orotate phosphoribosyltransferase (216 aa).

Residues Arg-101, Lys-105, His-107, and 127–135 (EDLISTGGS) contribute to the 5-phospho-alpha-D-ribose 1-diphosphate site. Ser-131 lines the orotate pocket.

The protein belongs to the purine/pyrimidine phosphoribosyltransferase family. PyrE subfamily. In terms of assembly, homodimer. The cofactor is Mg(2+).

It carries out the reaction orotidine 5'-phosphate + diphosphate = orotate + 5-phospho-alpha-D-ribose 1-diphosphate. Its pathway is pyrimidine metabolism; UMP biosynthesis via de novo pathway; UMP from orotate: step 1/2. Functionally, catalyzes the transfer of a ribosyl phosphate group from 5-phosphoribose 1-diphosphate to orotate, leading to the formation of orotidine monophosphate (OMP). The chain is Orotate phosphoribosyltransferase from Cutibacterium acnes (strain DSM 16379 / KPA171202) (Propionibacterium acnes).